The sequence spans 287 residues: 3-methyl-2-oxobutanoate hydroxymethyltransferase (287 aa).

The Mg(2+) site is built by aspartate 57 and aspartate 96. 3-methyl-2-oxobutanoate contacts are provided by residues 57-58 (DS), aspartate 96, and lysine 125. Glutamate 127 is a Mg(2+) binding site. The active-site Proton acceptor is glutamate 194.

The protein belongs to the PanB family. In terms of assembly, homodecamer; pentamer of dimers. The cofactor is Mg(2+).

The protein localises to the cytoplasm. It catalyses the reaction 3-methyl-2-oxobutanoate + (6R)-5,10-methylene-5,6,7,8-tetrahydrofolate + H2O = 2-dehydropantoate + (6S)-5,6,7,8-tetrahydrofolate. Its pathway is cofactor biosynthesis; (R)-pantothenate biosynthesis; (R)-pantoate from 3-methyl-2-oxobutanoate: step 1/2. Functionally, catalyzes the reversible reaction in which hydroxymethyl group from 5,10-methylenetetrahydrofolate is transferred onto alpha-ketoisovalerate to form ketopantoate. This is 3-methyl-2-oxobutanoate hydroxymethyltransferase from Methylobacterium sp. (strain 4-46).